The primary structure comprises 456 residues: Phosphatidylinositol N-acetylglucosaminyltransferase gpi3 subunit (456 aa).

Belongs to the glycosyltransferase group 1 family. Glycosyltransferase 4 subfamily. In terms of assembly, component of a Phosphatidylinositol N-acetylglucosaminyltransferase complex.

It catalyses the reaction a 1,2-diacyl-sn-glycero-3-phospho-(1D-myo-inositol) + UDP-N-acetyl-alpha-D-glucosamine = a 6-(N-acetyl-alpha-D-glucosaminyl)-1-(1,2-diacyl-sn-glycero-3-phospho)-1D-myo-inositol + UDP + H(+). It participates in glycolipid biosynthesis; glycosylphosphatidylinositol-anchor biosynthesis. Functionally, catalytic subunit in the complex catalyzing the transfer of N-acetylglucosamine from UDP-N-acetylglucosamine to phosphatidylinositol, the first step of GPI biosynthesis. This is Phosphatidylinositol N-acetylglucosaminyltransferase gpi3 subunit (gpi3) from Schizosaccharomyces pombe (strain 972 / ATCC 24843) (Fission yeast).